The primary structure comprises 75 residues: Cytochrome c oxidase subunit 6C (75 aa).

Residues 1–13 lie on the Mitochondrial matrix side of the membrane; that stretch reads MAPEVLPKPQMRG. Residues 14-54 form a helical membrane-spanning segment; the sequence is LLAKRLRFHMVTAFVLSLGVAALYKFRVADKRKKAYADFYR. Topologically, residues 55-75 are mitochondrial intermembrane; sequence NYDAMKDFEEMRKAGIFQSVK.

This sequence belongs to the cytochrome c oxidase subunit 6c family. As to quaternary structure, component of the cytochrome c oxidase (complex IV, CIV), a multisubunit enzyme composed of 14 subunits. The complex is composed of a catalytic core of 3 subunits MT-CO1, MT-CO2 and MT-CO3, encoded in the mitochondrial DNA, and 11 supernumerary subunits COX4I, COX5A, COX5B, COX6A, COX6B, COX6C, COX7A, COX7B, COX7C, COX8 and NDUFA4, which are encoded in the nuclear genome. The complex exists as a monomer or a dimer and forms supercomplexes (SCs) in the inner mitochondrial membrane with NADH-ubiquinone oxidoreductase (complex I, CI) and ubiquinol-cytochrome c oxidoreductase (cytochrome b-c1 complex, complex III, CIII), resulting in different assemblies (supercomplex SCI(1)III(2)IV(1) and megacomplex MCI(2)III(2)IV(2)).

It is found in the mitochondrion inner membrane. It functions in the pathway energy metabolism; oxidative phosphorylation. In terms of biological role, component of the cytochrome c oxidase, the last enzyme in the mitochondrial electron transport chain which drives oxidative phosphorylation. The respiratory chain contains 3 multisubunit complexes succinate dehydrogenase (complex II, CII), ubiquinol-cytochrome c oxidoreductase (cytochrome b-c1 complex, complex III, CIII) and cytochrome c oxidase (complex IV, CIV), that cooperate to transfer electrons derived from NADH and succinate to molecular oxygen, creating an electrochemical gradient over the inner membrane that drives transmembrane transport and the ATP synthase. Cytochrome c oxidase is the component of the respiratory chain that catalyzes the reduction of oxygen to water. Electrons originating from reduced cytochrome c in the intermembrane space (IMS) are transferred via the dinuclear copper A center (CU(A)) of subunit 2 and heme A of subunit 1 to the active site in subunit 1, a binuclear center (BNC) formed by heme A3 and copper B (CU(B)). The BNC reduces molecular oxygen to 2 water molecules using 4 electrons from cytochrome c in the IMS and 4 protons from the mitochondrial matrix. The protein is Cytochrome c oxidase subunit 6C (COX6C) of Trachypithecus cristatus (Silvered leaf-monkey).